We begin with the raw amino-acid sequence, 54 residues long: Large ribosomal subunit protein bL33A (54 aa).

The protein belongs to the bacterial ribosomal protein bL33 family.

This is Large ribosomal subunit protein bL33A from Myxococcus xanthus (strain DK1622).